We begin with the raw amino-acid sequence, 284 residues long: uncharacterized protein (284 aa).

It belongs to the methyltransferase superfamily.

The protein localises to the cytoplasm. Its subcellular location is the nucleus. Its function is as follows. Probable methyltransferase. This is an uncharacterized protein from Schizosaccharomyces pombe (strain 972 / ATCC 24843) (Fission yeast).